Here is a 141-residue protein sequence, read N- to C-terminus: Large ribosomal subunit protein uL11 (141 aa).

Belongs to the universal ribosomal protein uL11 family. Part of the ribosomal stalk of the 50S ribosomal subunit. Interacts with L10 and the large rRNA to form the base of the stalk. L10 forms an elongated spine to which L12 dimers bind in a sequential fashion forming a multimeric L10(L12)X complex. Post-translationally, one or more lysine residues are methylated.

In terms of biological role, forms part of the ribosomal stalk which helps the ribosome interact with GTP-bound translation factors. This chain is Large ribosomal subunit protein uL11, found in Thermotoga petrophila (strain ATCC BAA-488 / DSM 13995 / JCM 10881 / RKU-1).